A 46-amino-acid polypeptide reads, in one-letter code: Defensin Tk-AMP-D5 (46 aa).

4 cysteine pairs are disulfide-bonded: Cys3/Cys46, Cys14/Cys34, Cys20/Cys40, and Cys24/Cys42.

In terms of biological role, plant defense peptide. The protein is Defensin Tk-AMP-D5 of Triticum kiharae (Wheat).